A 400-amino-acid chain; its full sequence is Argininosuccinate synthase (400 aa).

Residue 10-18 coordinates ATP; that stretch reads AYSGGVDTS. Residue Tyr-89 coordinates L-citrulline. Gly-119 lines the ATP pocket. Thr-121, Asn-125, and Asp-126 together coordinate L-aspartate. Position 125 (Asn-125) interacts with L-citrulline. The L-citrulline site is built by Arg-129, Ser-177, Ser-186, Glu-262, and Tyr-274.

It belongs to the argininosuccinate synthase family. Type 1 subfamily. As to quaternary structure, homotetramer.

The protein localises to the cytoplasm. The catalysed reaction is L-citrulline + L-aspartate + ATP = 2-(N(omega)-L-arginino)succinate + AMP + diphosphate + H(+). It functions in the pathway amino-acid biosynthesis; L-arginine biosynthesis; L-arginine from L-ornithine and carbamoyl phosphate: step 2/3. This Synechococcus sp. (strain JA-2-3B'a(2-13)) (Cyanobacteria bacterium Yellowstone B-Prime) protein is Argininosuccinate synthase.